Reading from the N-terminus, the 66-residue chain is uncharacterized protein (66 aa).

Low complexity predominate over residues 1–18 (MSTTSSSSTFSTRTASLS). A disordered region spans residues 1–22 (MSTTSSSSTFSTRTASLSQSYT).

This is an uncharacterized protein from Schizosaccharomyces pombe (strain 972 / ATCC 24843) (Fission yeast).